Consider the following 247-residue polypeptide: Probable transcriptional regulatory protein LBF_0056 (247 aa).

The protein belongs to the TACO1 family.

The protein localises to the cytoplasm. The chain is Probable transcriptional regulatory protein LBF_0056 from Leptospira biflexa serovar Patoc (strain Patoc 1 / Ames).